A 264-amino-acid polypeptide reads, in one-letter code: Thymidylate synthase (264 aa).

Arginine 21 is a dUMP binding site. Residue histidine 51 participates in (6R)-5,10-methylene-5,6,7,8-tetrahydrofolate binding. 126–127 (RR) is a binding site for dUMP. Cysteine 146 functions as the Nucleophile in the catalytic mechanism. DUMP is bound by residues 166 to 169 (RSCD), asparagine 177, and 207 to 209 (HLY). (6R)-5,10-methylene-5,6,7,8-tetrahydrofolate is bound at residue aspartate 169. Residue alanine 263 participates in (6R)-5,10-methylene-5,6,7,8-tetrahydrofolate binding.

This sequence belongs to the thymidylate synthase family. Bacterial-type ThyA subfamily. As to quaternary structure, homodimer.

It localises to the cytoplasm. The catalysed reaction is dUMP + (6R)-5,10-methylene-5,6,7,8-tetrahydrofolate = 7,8-dihydrofolate + dTMP. The protein operates within pyrimidine metabolism; dTTP biosynthesis. Its function is as follows. Catalyzes the reductive methylation of 2'-deoxyuridine-5'-monophosphate (dUMP) to 2'-deoxythymidine-5'-monophosphate (dTMP) while utilizing 5,10-methylenetetrahydrofolate (mTHF) as the methyl donor and reductant in the reaction, yielding dihydrofolate (DHF) as a by-product. This enzymatic reaction provides an intracellular de novo source of dTMP, an essential precursor for DNA biosynthesis. This is Thymidylate synthase from Escherichia coli (strain 55989 / EAEC).